A 490-amino-acid chain; its full sequence is Cytochrome P450 2C20 (490 aa).

Cys435 provides a ligand contact to heme.

This sequence belongs to the cytochrome P450 family. Requires heme as cofactor.

The protein resides in the endoplasmic reticulum membrane. It localises to the microsome membrane. The enzyme catalyses an organic molecule + reduced [NADPH--hemoprotein reductase] + O2 = an alcohol + oxidized [NADPH--hemoprotein reductase] + H2O + H(+). Functionally, cytochromes P450 are a group of heme-thiolate monooxygenases. In liver microsomes, this enzyme is involved in an NADPH-dependent electron transport pathway. It oxidizes a variety of structurally unrelated compounds, including steroids, fatty acids, and xenobiotics. The polypeptide is Cytochrome P450 2C20 (CYP2C20) (Macaca fascicularis (Crab-eating macaque)).